We begin with the raw amino-acid sequence, 1377 residues long: DNA-directed RNA polymerase subunit beta' (1377 aa).

Zn(2+) contacts are provided by Cys60, Cys62, Cys75, and Cys78. Residues Asp449, Asp451, and Asp453 each contribute to the Mg(2+) site. 4 residues coordinate Zn(2+): Cys777, Cys851, Cys858, and Cys861.

It belongs to the RNA polymerase beta' chain family. As to quaternary structure, the RNAP catalytic core consists of 2 alpha, 1 beta, 1 beta' and 1 omega subunit. When a sigma factor is associated with the core the holoenzyme is formed, which can initiate transcription. The cofactor is Mg(2+). Zn(2+) serves as cofactor.

It catalyses the reaction RNA(n) + a ribonucleoside 5'-triphosphate = RNA(n+1) + diphosphate. Its function is as follows. DNA-dependent RNA polymerase catalyzes the transcription of DNA into RNA using the four ribonucleoside triphosphates as substrates. The chain is DNA-directed RNA polymerase subunit beta' from Borreliella afzelii (strain PKo) (Borrelia afzelii).